We begin with the raw amino-acid sequence, 36 residues long: Probable non-specific lipid-transfer protein (36 aa).

Belongs to the plant LTP family. Phosphorylated by Ca(2+)-dependent protein kinase.

Functionally, plant non-specific lipid-transfer proteins transfer phospholipids as well as galactolipids across membranes. May play a role in wax or cutin deposition in the cell walls of expanding epidermal cells and certain secretory tissues. The protein is Probable non-specific lipid-transfer protein of Pinus pinea (Italian stone pine).